Reading from the N-terminus, the 262-residue chain is Trypsin theta (262 aa).

Residues 1-19 (MHGLVVLLVCLAVGSAFAG) form the signal peptide. Positions 20 to 34 (TIGVSNADPFEREGR) are cleaved as a propeptide — activation peptide. A Peptidase S1 domain is found at 35–260 (IVGGEDTTIR…LRKWILNASQ (226 aa)). A disulfide bond links Cys61 and Cys77. Residues His76 and Asp121 each act as charge relay system in the active site. Cystine bridges form between Cys186–Cys203 and Cys212–Cys236. The active-site Charge relay system is Ser216.

It belongs to the peptidase S1 family.

The protein resides in the secreted. Its subcellular location is the extracellular space. It carries out the reaction Preferential cleavage: Arg-|-Xaa, Lys-|-Xaa.. This is Trypsin theta (thetaTry) from Drosophila erecta (Fruit fly).